The primary structure comprises 98 residues: Large ribosomal subunit protein eL21 (98 aa).

Belongs to the eukaryotic ribosomal protein eL21 family.

The protein is Large ribosomal subunit protein eL21 of Methanocorpusculum labreanum (strain ATCC 43576 / DSM 4855 / Z).